The chain runs to 294 residues: Ribosomal RNA small subunit methyltransferase H (294 aa).

S-adenosyl-L-methionine-binding positions include 31-33 (GGY), Asp-49, Phe-76, Asp-97, and Gln-104.

This sequence belongs to the methyltransferase superfamily. RsmH family.

It is found in the cytoplasm. The catalysed reaction is cytidine(1402) in 16S rRNA + S-adenosyl-L-methionine = N(4)-methylcytidine(1402) in 16S rRNA + S-adenosyl-L-homocysteine + H(+). Its function is as follows. Specifically methylates the N4 position of cytidine in position 1402 (C1402) of 16S rRNA. The sequence is that of Ribosomal RNA small subunit methyltransferase H from Wolbachia pipientis subsp. Culex pipiens (strain wPip).